A 144-amino-acid polypeptide reads, in one-letter code: 3-dehydroquinate dehydratase (144 aa).

Tyr22 serves as the catalytic Proton acceptor. Substrate-binding residues include Asn73, His79, and Asp86. The active-site Proton donor is the His99. Residues 100-101 (IS) and Arg110 each bind substrate.

It belongs to the type-II 3-dehydroquinase family. Homododecamer.

The enzyme catalyses 3-dehydroquinate = 3-dehydroshikimate + H2O. The protein operates within metabolic intermediate biosynthesis; chorismate biosynthesis; chorismate from D-erythrose 4-phosphate and phosphoenolpyruvate: step 3/7. Catalyzes a trans-dehydration via an enolate intermediate. The protein is 3-dehydroquinate dehydratase of Mycobacteroides abscessus (strain ATCC 19977 / DSM 44196 / CCUG 20993 / CIP 104536 / JCM 13569 / NCTC 13031 / TMC 1543 / L948) (Mycobacterium abscessus).